The sequence spans 750 residues: MHTGGETSACKPSSVRLAPSFSFHAAGLQMAGQMSHSHQQYSDRHQQNLNDQQASALPYNDQTPQPLPNQRRMPQTFRDPATAPLRKLSVDLIKTYKHINEVYYAKKKRRHQQGQGDDSSHKKERKVYNDGYDDDNYDYIVKNGEKWMDRYEIDSLIGKGSFGQVVKAYDRVEQEWVAIKIIKNKKAFLNQAQIEVRLLELMNKHDTEMKYYIVHLKRHFMFRNHLCLVFEMLSYNLYDLLRNTNFRGVSLNLTRKFAQQMCTALLFLATPELSIIHCDLKPENILLCNPKRSAIKIVDFGSSCQLGQRIYQYIQSRFYRSPEVLLGTPYDLAIDMWSLGCILVEMHTGEPLFSGANEVDQMSKIVEVLGIPPAHILDQAPKARKFFEKMPEGTWNLKKTKDGKKEYKPPGTRKLHNILGVENGGPGGRRAGESGHTVADYLKFKDVILRMLDYDAKTRIQPYYALQHSFFKKTADEGTNTSNSVSTSPAMEQSQSSGTTSSTSSSSGGSSGTSNSGRARSDPTHQHRHSGGHFTTAVAMDCETHSPQVRQQFPPGWTVPEAPTQVTIETHPVQETTFHVPPSQKNVPHHHGNGSHHHHHHHHHHHGQHILSNRTRTRIYNSPSTSSSTQDSMDIGNSHHSMTSLSSSTTSSSTSSSSTGNQGNQAYQNRPVAANTLDFGQNGTLDVNLTVYSNPRQETGITGHPDYQYSANTGPGHYVTEGQLTMRQGIDREDSPMTGVCVQQSPVASS.

2 disordered regions span residues 56 to 81 and 104 to 129; these read ALPY…RDPA and YAKK…KVYN. The Bipartite nuclear localization signal signature appears at 109–126; that stretch reads RRHQQGQGDDSSHKKERK. A Protein kinase domain is found at 151 to 471; sequence YEIDSLIGKG…PYYALQHSFF (321 aa). ATP-binding positions include 157–165, Lys180, and 230–233; these read IGKGSFGQV and FEML. Asp279 serves as the catalytic Proton acceptor. 4 disordered regions span residues 400–434, 477–531, 583–666, and 731–750; these read TKDG…AGES, EGTN…RHSG, SQKN…GNQA, and DRED…VASS. The span at 477 to 493 shows a compositional bias: polar residues; sequence EGTNTSNSVSTSPAMEQ. The span at 494–517 shows a compositional bias: low complexity; it reads SQSSGTTSSTSSSSGGSSGTSNSG. Residues 584-612 are histidine-rich domain (HRD); that stretch reads QKNVPHHHGNGSHHHHHHHHHHHGQHILS. Basic residues predominate over residues 587 to 608; the sequence is VPHHHGNGSHHHHHHHHHHHGQ. A compositionally biased stretch (polar residues) spans 610 to 621; the sequence is ILSNRTRTRIYN. A compositionally biased stretch (low complexity) spans 622–659; that stretch reads SPSTSSSTQDSMDIGNSHHSMTSLSSSTTSSSTSSSST. Positions 741–750 are enriched in polar residues; the sequence is CVQQSPVASS.

This sequence belongs to the protein kinase superfamily. CMGC Ser/Thr protein kinase family. MNB/DYRK subfamily. In terms of processing, autophosphorylated on tyrosine residues.

The protein resides in the nucleus. It is found in the nucleus speckle. It catalyses the reaction L-seryl-[protein] + ATP = O-phospho-L-seryl-[protein] + ADP + H(+). The enzyme catalyses L-threonyl-[protein] + ATP = O-phospho-L-threonyl-[protein] + ADP + H(+). The catalysed reaction is L-tyrosyl-[protein] + ATP = O-phospho-L-tyrosyl-[protein] + ADP + H(+). It carries out the reaction [DNA-directed RNA polymerase] + ATP = phospho-[DNA-directed RNA polymerase] + ADP + H(+). Its function is as follows. Dual-specificity kinase which possesses both serine/threonine and tyrosine kinase activities. Exhibits a substrate preference for proline at position P+1 and arginine at position P-3. Plays an important role in double-strand breaks (DSBs) repair following DNA damage. Mechanistically, phosphorylates RNF169 and increases its ability to block accumulation of TP53BP1 at the DSB sites thereby promoting homologous recombination repair (HRR). Also acts as a positive regulator of transcription by acting as a CTD kinase that mediates phosphorylation of the CTD (C-terminal domain) of the large subunit of RNA polymerase II (RNAP II) POLR2A. Modulates alternative splicing by phosphorylating the splice factor SRSF6. Phosphorylates SEPTIN4, SEPTIN5 and SF3B1. In Xenopus laevis (African clawed frog), this protein is Dual specificity tyrosine-phosphorylation-regulated kinase 1A.